The sequence spans 204 residues: Protein Mis18-alpha (204 aa).

3 positions are modified to phosphoserine: serine 13, serine 16, and serine 17. The Mis18 domain maps to 51-149; it reads PLVFLCARCR…SVEAVESYTL (99 aa). Zn(2+) is bound by residues cysteine 56, cysteine 59, cysteine 112, and cysteine 115. Lysine 133 participates in a covalent cross-link: Glycyl lysine isopeptide (Lys-Gly) (interchain with G-Cter in SUMO2). The residue at position 204 (serine 204) is a Phosphoserine.

This sequence belongs to the mis18 family. As to quaternary structure, homodimer, and heterodimer with OIP5/MIS18B. Identified in a complex containing MIS18A, OIP5/MIS18B, MIS18BP1, RBBP7 and RBBP4.

The protein resides in the nucleus. The protein localises to the chromosome. Its subcellular location is the centromere. Required for recruitment of CENPA to centromeres and normal chromosome segregation during mitosis. In Mus musculus (Mouse), this protein is Protein Mis18-alpha (Mis18a).